The chain runs to 117 residues: MDFQFTHYQGNVSVKCSMEHIALANWFNTEVRSNSDKILTALSTAKSLIENQEKVLIGTEYTLFLNADEVMVRANNLAIESDEILEQDFHYYDEESLAFCGTQDFIHFLQSYVDFIA.

Belongs to the UPF0231 family.

The protein is UPF0231 protein HI_1724 of Haemophilus influenzae (strain ATCC 51907 / DSM 11121 / KW20 / Rd).